The following is an 87-amino-acid chain: Small ribosomal subunit protein uS17 (87 aa).

This sequence belongs to the universal ribosomal protein uS17 family. In terms of assembly, part of the 30S ribosomal subunit.

Its function is as follows. One of the primary rRNA binding proteins, it binds specifically to the 5'-end of 16S ribosomal RNA. This is Small ribosomal subunit protein uS17 from Bacillus licheniformis (strain ATCC 14580 / DSM 13 / JCM 2505 / CCUG 7422 / NBRC 12200 / NCIMB 9375 / NCTC 10341 / NRRL NRS-1264 / Gibson 46).